A 532-amino-acid chain; its full sequence is MTSGRVNPQFRLEDQGIEGLGNVYYNFMEPALIEAALKRGEGTLGNGGAFLVTTGKFTGRSPKDKHVVKTASVADSIWWDNNAAMTPEGFDALYDDMLAHMKGKDYFVQDLVGGADPAYSINVRMVTELAWHNLFIRHLLRRPAREDLNEFVADFTVINCPSFQADPAKHGCRSETVIAMNFDRKLILIGGTEYAGENKKSVFTLLNYMLPEKGVMPMHCSANHAVGNPVDTAVFFGLSGTGKTTLSADPARVLIGDDEHGWSDRGTFNFEGGCYAKTINLNPEAEPEIYATTTKFATVIENMVFDEETKELDFDDDSLTANMRCAYPLEYISNASVSALGGHPKNIIMLTCDAFGVLPPIARLTPAQAMYHFLSGFTSKVAGTERGVTEPQPTFSTCFGAPFMPRRPEVYGNLLRDKIARHGATCWLVNTGWTGGAYGVGSRMPIKATRALLTAALNGSLNNAEFRKDGNFGFDVPVSVPGVAEVLLDPRRTWDDQGAFDKQAAKLVQMFADNFEQYVPYIDEDVKAVAIG.

The substrate site is built by Arg60, Tyr194, and Lys200. Residues Lys200, His219, and 237–245 (GLSGTGKTT) contribute to the ATP site. Mn(2+)-binding residues include Lys200 and His219. Residue Asp258 participates in Mn(2+) binding. ATP-binding residues include Glu286, Arg324, and Thr449. Arg324 contributes to the substrate binding site.

Belongs to the phosphoenolpyruvate carboxykinase (ATP) family. Mn(2+) is required as a cofactor.

The protein resides in the cytoplasm. It carries out the reaction oxaloacetate + ATP = phosphoenolpyruvate + ADP + CO2. It participates in carbohydrate biosynthesis; gluconeogenesis. Its function is as follows. Involved in the gluconeogenesis. Catalyzes the conversion of oxaloacetate (OAA) to phosphoenolpyruvate (PEP) through direct phosphoryl transfer between the nucleoside triphosphate and OAA. In Ruegeria pomeroyi (strain ATCC 700808 / DSM 15171 / DSS-3) (Silicibacter pomeroyi), this protein is Phosphoenolpyruvate carboxykinase (ATP).